The primary structure comprises 721 residues: Polyphosphate kinase (721 aa).

Asn47 lines the ATP pocket. 2 residues coordinate Mg(2+): Arg377 and Arg407. The active-site Phosphohistidine intermediate is the His437. 3 residues coordinate ATP: Tyr471, Arg567, and His595.

Belongs to the polyphosphate kinase 1 (PPK1) family. It depends on Mg(2+) as a cofactor. Post-translationally, an intermediate of this reaction is the autophosphorylated ppk in which a phosphate is covalently linked to a histidine residue through a N-P bond.

The catalysed reaction is [phosphate](n) + ATP = [phosphate](n+1) + ADP. In terms of biological role, catalyzes the reversible transfer of the terminal phosphate of ATP to form a long-chain polyphosphate (polyP). This is Polyphosphate kinase from Exiguobacterium sp. (strain ATCC BAA-1283 / AT1b).